The primary structure comprises 334 residues: Holliday junction branch migration complex subunit RuvB (334 aa).

Positions 1 to 182 (MDDRMVDQSM…FGVHLRLEYY (182 aa)) are large ATPase domain (RuvB-L). Residues Leu21, Arg22, Gly63, Lys66, Thr67, Thr68, 129 to 131 (EDF), Arg172, Tyr182, and Arg219 contribute to the ATP site. Thr67 serves as a coordination point for Mg(2+). Residues 183 to 253 (QELELKEIIV…TTRASLQLLQ (71 aa)) are small ATPAse domain (RuvB-S). A head domain (RuvB-H) region spans residues 256 to 334 (DEGLDYIDHK…HFSKKNGKKE (79 aa)). 3 residues coordinate DNA: Arg292, Arg311, and Arg316.

The protein belongs to the RuvB family. In terms of assembly, homohexamer. Forms an RuvA(8)-RuvB(12)-Holliday junction (HJ) complex. HJ DNA is sandwiched between 2 RuvA tetramers; dsDNA enters through RuvA and exits via RuvB. An RuvB hexamer assembles on each DNA strand where it exits the tetramer. Each RuvB hexamer is contacted by two RuvA subunits (via domain III) on 2 adjacent RuvB subunits; this complex drives branch migration. In the full resolvosome a probable DNA-RuvA(4)-RuvB(12)-RuvC(2) complex forms which resolves the HJ.

The protein localises to the cytoplasm. The enzyme catalyses ATP + H2O = ADP + phosphate + H(+). Its function is as follows. The RuvA-RuvB-RuvC complex processes Holliday junction (HJ) DNA during genetic recombination and DNA repair, while the RuvA-RuvB complex plays an important role in the rescue of blocked DNA replication forks via replication fork reversal (RFR). RuvA specifically binds to HJ cruciform DNA, conferring on it an open structure. The RuvB hexamer acts as an ATP-dependent pump, pulling dsDNA into and through the RuvAB complex. RuvB forms 2 homohexamers on either side of HJ DNA bound by 1 or 2 RuvA tetramers; 4 subunits per hexamer contact DNA at a time. Coordinated motions by a converter formed by DNA-disengaged RuvB subunits stimulates ATP hydrolysis and nucleotide exchange. Immobilization of the converter enables RuvB to convert the ATP-contained energy into a lever motion, pulling 2 nucleotides of DNA out of the RuvA tetramer per ATP hydrolyzed, thus driving DNA branch migration. The RuvB motors rotate together with the DNA substrate, which together with the progressing nucleotide cycle form the mechanistic basis for DNA recombination by continuous HJ branch migration. Branch migration allows RuvC to scan DNA until it finds its consensus sequence, where it cleaves and resolves cruciform DNA. The sequence is that of Holliday junction branch migration complex subunit RuvB from Staphylococcus saprophyticus subsp. saprophyticus (strain ATCC 15305 / DSM 20229 / NCIMB 8711 / NCTC 7292 / S-41).